We begin with the raw amino-acid sequence, 406 residues long: Purine nucleoside permease (406 aa).

An N-terminal signal peptide occupies residues 1–22 (MKLSTLFTLATTISTLTTFTIA).

Belongs to the NUP family. Post-translationally, predicted to be a substrate for cleavage by KEX2.

Its activity is regulated as follows. Mammalian nucleoside transport inhibitors dipyridamole and NBMPR inhibit adenosine transport by NUP. Its function is as follows. Nucleoside permease that transports adenosine and guanosine. Does not show any transport activities towards cytidine, adenine, guanine, uridine, and uracil. The chain is Purine nucleoside permease from Candida albicans (strain SC5314 / ATCC MYA-2876) (Yeast).